The chain runs to 157 residues: Small ribosomal subunit protein uS9 (157 aa).

This sequence belongs to the universal ribosomal protein uS9 family.

This Caulobacter vibrioides (strain ATCC 19089 / CIP 103742 / CB 15) (Caulobacter crescentus) protein is Small ribosomal subunit protein uS9.